Reading from the N-terminus, the 308-residue chain is uncharacterized protein (308 aa).

This is an uncharacterized protein from Treponema pallidum (strain Nichols).